Here is a 558-residue protein sequence, read N- to C-terminus: uncharacterized protein (558 aa).

The 200-residue stretch at 7–206 (SNFIDMLRLG…FACFLEGMLS (200 aa)) folds into the DhaL domain.

This is an uncharacterized protein from Mycoplasma pneumoniae (strain ATCC 29342 / M129 / Subtype 1) (Mycoplasmoides pneumoniae).